A 94-amino-acid polypeptide reads, in one-letter code: Large ribosomal subunit protein bL27 (94 aa).

The propeptide occupies Met1–Phe9. Residues His11–Ala33 are disordered.

This sequence belongs to the bacterial ribosomal protein bL27 family. In terms of processing, the N-terminus is cleaved by ribosomal processing cysteine protease Prp.

This is Large ribosomal subunit protein bL27 from Streptococcus agalactiae serotype V (strain ATCC BAA-611 / 2603 V/R).